The sequence spans 198 residues: Recombination protein RecR (198 aa).

Residues 57-72 (CEKCNTFTEAQICEVC) form a C4-type zinc finger. A Toprim domain is found at 80–175 (TLLCVVETPA…AVTRLARGVP (96 aa)).

It belongs to the RecR family.

Its function is as follows. May play a role in DNA repair. It seems to be involved in an RecBC-independent recombinational process of DNA repair. It may act with RecF and RecO. This is Recombination protein RecR from Burkholderia vietnamiensis (strain G4 / LMG 22486) (Burkholderia cepacia (strain R1808)).